Here is a 766-residue protein sequence, read N- to C-terminus: MAPGPFSSGLFSPPPAALPFLLLLWAGASRGQPCPGRCICQNVAPTLTMLCAKTGLLFVPPAIDRRVVELRLTDNFIAAVRRRDFANMTSLVHLTLSRNTIGQVAAGAFADLRALRALHLDSNRLAEVRGDQLRGLGNLRHLILGNNQIRKVESAAFDAFLSTVEDLDLSYNNLEALPWEAVGQMVNLNTLTLDHNLIDHIAEGTFVQLHKLVRLDMTSNRLHKLPPDGLFLRSQGGGPKPPTPLTVSFGGNPLHCNCELLWLRRLTREDDLETCATPEHLTDRYFWSIPEEEFLCEPPLITRQAGGRALVVEGQAVSLRCRAVGDPEPVVHWVAPDGRLLGNSSRTRVRGDGTLDVTITTLRDSGTFTCIASNAAGEATAPVEVCVVPLPLMAPPPAAPPPLTEPGSSDIATPGRPGANDSTSERRLVAAELTSSSVLIRWPAQRPVPGIRMYQVQYNSSADDSLVYRMIPSTSQTFLVNDLAAGRAYDLCVLAVYDDGATALPATRVVGCVQFTTAGDPAPCRPLRAHFLGGTMIIAIGGVIVASVLVFIVLLMIRYKVYGDGDSRRIKGTSRTPPRVSHVCSQTNGAGAQQASAPPAPDRYEALREVAVPAAIEAKAMEAEATSTELEVVLGRSLGGSATSLCLLPSEETSGEESRAMTGPRRSRSGALGPPTSAPPTLALVPGGAPARPRPQQRYSFDGDYGALFQSHSYPRRARRTKRHRSTPHLDGAGGGAAGEDGDLGLGSARARLAFTSTEWMLESTV.

The signal sequence occupies residues 1 to 31 (MAPGPFSSGLFSPPPAALPFLLLLWAGASRG). In terms of domain architecture, LRRNT spans 32–65 (QPCPGRCICQNVAPTLTMLCAKTGLLFVPPAIDR). At 32–536 (QPCPGRCICQ…LRAHFLGGTM (505 aa)) the chain is on the extracellular side. LRR repeat units follow at residues 66–87 (RVVE…DFAN), 90–111 (SLVH…AFAD), 114–135 (ALRA…QLRG), 138–159 (NLRH…AFDA), 163–184 (TVED…AVGQ), 187–208 (NLNT…TFVQ), and 211–232 (KLVR…GLFL). N-linked (GlcNAc...) asparagine glycosylation is present at Asn87. The LRRCT domain occupies 252–298 (NPLHCNCELLWLRRLTREDDLETCATPEHLTDRYFWSIPEEEFLCEP). Residues 299–386 (PLITRQAGGR…GEATAPVEVC (88 aa)) form the Ig-like domain. The cysteines at positions 321 and 370 are disulfide-linked. Residue Asn343 is glycosylated (N-linked (GlcNAc...) asparagine). The disordered stretch occupies residues 397 to 424 (PAAPPPLTEPGSSDIATPGRPGANDSTS). Positions 424 to 520 (SERRLVAAEL…GCVQFTTAGD (97 aa)) constitute a Fibronectin type-III domain. Residues 537–557 (IIAIGGVIVASVLVFIVLLMI) form a helical membrane-spanning segment. Residues 558–766 (RYKVYGDGDS…STEWMLESTV (209 aa)) lie on the Cytoplasmic side of the membrane. Disordered stretches follow at residues 568–601 (RRIK…PPAP) and 645–742 (LCLL…GEDG). A Phosphoserine modification is found at Ser713. Basic residues predominate over residues 714 to 727 (YPRRARRTKRHRST). Residues 763 to 766 (ESTV) carry the PDZ-binding motif.

This sequence belongs to the LRFN family. Can form heteromeric complexes with LRFN2, LRFN3, LRFN4 and LRFN5. Forms homomeric complexes, but not across cell junctions. Interacts with DLG4. Also interacts with DLG1, DLG2, and DLG3. Interacts with 2 AMPA receptor subunits GRIA1 and GRIA2 and NMDA receptor subunit GRIN1. Glycosylated. As to expression, predominantly expressed in the brain, with a weak, but broad expression in the cerebral cortex and diencephalic nuclei. Also detected in other parts of the central nervous system, including the olfactory bulb, pons, cerebellum, and medulla oblongata, as well as in the peripheral nervous system, such as the ganglia of cranial nerves and the dorsal root ganglion during gestation.

Its subcellular location is the membrane. The protein localises to the synapse. The protein resides in the postsynaptic density membrane. Its function is as follows. Promotes neurite outgrowth in hippocampal neurons. Involved in the regulation and maintenance of excitatory synapses. Induces the clustering of excitatory postsynaptic proteins, including DLG4, DLGAP1, GRIA1 and GRIN1. The chain is Leucine-rich repeat and fibronectin type III domain-containing protein 1 (Lrfn1) from Mus musculus (Mouse).